The primary structure comprises 506 residues: 2-isopropylmalate synthase (506 aa).

Residues 4-266 (ILFMDTTLRD…EPSMTLKEIK (263 aa)) form the Pyruvate carboxyltransferase domain. Residues aspartate 13, histidine 201, histidine 203, and asparagine 237 each coordinate Mn(2+). The tract at residues 390–506 (NITQLQVHFV…KLKSFIQLVK (117 aa)) is regulatory domain.

Belongs to the alpha-IPM synthase/homocitrate synthase family. LeuA type 1 subfamily. Homodimer. The cofactor is Mn(2+).

Its subcellular location is the cytoplasm. It carries out the reaction 3-methyl-2-oxobutanoate + acetyl-CoA + H2O = (2S)-2-isopropylmalate + CoA + H(+). Its pathway is amino-acid biosynthesis; L-leucine biosynthesis; L-leucine from 3-methyl-2-oxobutanoate: step 1/4. In terms of biological role, catalyzes the condensation of the acetyl group of acetyl-CoA with 3-methyl-2-oxobutanoate (2-ketoisovalerate) to form 3-carboxy-3-hydroxy-4-methylpentanoate (2-isopropylmalate). The protein is 2-isopropylmalate synthase of Bacillus cereus (strain AH820).